A 315-amino-acid polypeptide reads, in one-letter code: 4-hydroxy-3-methylbut-2-enyl diphosphate reductase (315 aa).

Cysteine 12 provides a ligand contact to [4Fe-4S] cluster. Histidine 41 and histidine 74 together coordinate (2E)-4-hydroxy-3-methylbut-2-enyl diphosphate. Residues histidine 41 and histidine 74 each coordinate dimethylallyl diphosphate. The isopentenyl diphosphate site is built by histidine 41 and histidine 74. [4Fe-4S] cluster is bound at residue cysteine 96. Histidine 124 contacts (2E)-4-hydroxy-3-methylbut-2-enyl diphosphate. Histidine 124 is a binding site for dimethylallyl diphosphate. Histidine 124 is a binding site for isopentenyl diphosphate. Glutamate 126 acts as the Proton donor in catalysis. Threonine 168 lines the (2E)-4-hydroxy-3-methylbut-2-enyl diphosphate pocket. Cysteine 198 provides a ligand contact to [4Fe-4S] cluster. Serine 226, serine 227, asparagine 228, and serine 270 together coordinate (2E)-4-hydroxy-3-methylbut-2-enyl diphosphate. Dimethylallyl diphosphate is bound by residues serine 226, serine 227, asparagine 228, and serine 270. Isopentenyl diphosphate is bound by residues serine 226, serine 227, asparagine 228, and serine 270.

This sequence belongs to the IspH family. The cofactor is [4Fe-4S] cluster.

It carries out the reaction isopentenyl diphosphate + 2 oxidized [2Fe-2S]-[ferredoxin] + H2O = (2E)-4-hydroxy-3-methylbut-2-enyl diphosphate + 2 reduced [2Fe-2S]-[ferredoxin] + 2 H(+). The catalysed reaction is dimethylallyl diphosphate + 2 oxidized [2Fe-2S]-[ferredoxin] + H2O = (2E)-4-hydroxy-3-methylbut-2-enyl diphosphate + 2 reduced [2Fe-2S]-[ferredoxin] + 2 H(+). It participates in isoprenoid biosynthesis; dimethylallyl diphosphate biosynthesis; dimethylallyl diphosphate from (2E)-4-hydroxy-3-methylbutenyl diphosphate: step 1/1. The protein operates within isoprenoid biosynthesis; isopentenyl diphosphate biosynthesis via DXP pathway; isopentenyl diphosphate from 1-deoxy-D-xylulose 5-phosphate: step 6/6. Functionally, catalyzes the conversion of 1-hydroxy-2-methyl-2-(E)-butenyl 4-diphosphate (HMBPP) into a mixture of isopentenyl diphosphate (IPP) and dimethylallyl diphosphate (DMAPP). Acts in the terminal step of the DOXP/MEP pathway for isoprenoid precursor biosynthesis. The sequence is that of 4-hydroxy-3-methylbut-2-enyl diphosphate reductase from Pseudomonas fluorescens (strain ATCC BAA-477 / NRRL B-23932 / Pf-5).